The primary structure comprises 282 residues: Endonuclease V (282 aa).

2 residues coordinate Mg(2+): Asp-52 and Asp-126. Residues 250 to 282 (SLGLPGPPTPRSPKAQRPVACPKGDSGESSALC) are disordered.

Belongs to the endonuclease V family. Monomer. Interacts with PABPC1; the interaction is RNA-dependent and stimulates ENDOV activity. Mg(2+) serves as cofactor.

The protein resides in the cytoplasm. The protein localises to the nucleus. It is found in the nucleolus. Its subcellular location is the stress granule. With respect to regulation, inhibited by normal intracellular concentrations of ATP. Functionally, endoribonuclease that specifically cleaves inosine-containing RNAs: cleaves RNA at the second phosphodiester bond 3' to inosine. Active against both single-stranded and double-stranded RNAs. Has strong preference for single-stranded RNAs (ssRNAs) toward double-stranded RNAs (dsRNAs). Cleaves mRNAs and tRNAs containing inosine. Also able to cleave structure-specific dsRNA substrates containing the specific sites 5'-IIUI-3' and 5'-UIUU-3'. Inosine is present in a number of RNAs following editing; the function of inosine-specific endoribonuclease is still unclear: it could either play a regulatory role in edited RNAs, or be involved in antiviral response by removing the hyperedited long viral dsRNA genome that has undergone A-to-I editing. Binds branched DNA structures. In terms of biological role, endoribonuclease that specifically cleaves inosine-containing RNAs: cleaves RNA at the second phosphodiester bond 3' to inosine. Active against both single-stranded and double-stranded RNAs. Cleaves tRNAs containing inosine. In Homo sapiens (Human), this protein is Endonuclease V (ENDOV).